Here is a 318-residue protein sequence, read N- to C-terminus: Olfactory receptor 2T34 (318 aa).

The Extracellular portion of the chain corresponds to methionine 1–alanine 30. 2 N-linked (GlcNAc...) asparagine glycosylation sites follow: asparagine 5 and asparagine 10. A helical membrane pass occupies residues leucine 31–isoleucine 54. Residues histidine 55–threonine 62 are Cytoplasmic-facing. Residues proline 63–proline 84 form a helical membrane-spanning segment. The Extracellular portion of the chain corresponds to lysine 85–glutamine 105. An intrachain disulfide couples cysteine 102 to cysteine 194. A helical transmembrane segment spans residues methionine 106–tyrosine 125. At aspartate 126–arginine 144 the chain is on the cytoplasmic side. Residues valine 145–leucine 163 traverse the membrane as a helical segment. Topologically, residues leucine 164 to tyrosine 200 are extracellular. Residues lysine 201–threonine 224 traverse the membrane as a helical segment. The Cytoplasmic segment spans residues leucine 225 to lysine 241. The chain crosses the membrane as a helical span at residues alanine 242–tyrosine 264. At methionine 265 to methionine 277 the chain is on the extracellular side. A helical membrane pass occupies residues methionine 278–leucine 297. Residues arginine 298–lysine 318 are Cytoplasmic-facing.

It belongs to the G-protein coupled receptor 1 family.

Its subcellular location is the cell membrane. In terms of biological role, odorant receptor. This Homo sapiens (Human) protein is Olfactory receptor 2T34 (OR2T34).